Here is a 302-residue protein sequence, read N- to C-terminus: N-acetylaspartate synthetase (302 aa).

The span at 46 to 60 (PGPAAAPPAPPPAPV) shows a compositional bias: pro residues. The disordered stretch occupies residues 46–72 (PGPAAAPPAPPPAPVAQPHGGAGGAGP). The chain crosses the membrane as a helical span at residues 121-141 (YALLAALCFAVSRSLLLTCLV). An N-acetyltransferase domain is found at 143 to 283 (AALLGLRYYY…VLPGMTLSLA (141 aa)).

It belongs to the NAT8 family. As to expression, expressed in brain.

The protein resides in the cytoplasm. It localises to the microsome membrane. It is found in the mitochondrion membrane. The protein localises to the endoplasmic reticulum membrane. The enzyme catalyses L-aspartate + acetyl-CoA = N-acetyl-L-aspartate + CoA + H(+). Its activity is regulated as follows. Aminooxyacetic acid (AOAA) blocks its activity in both cytoplasm and mitochondria. Its function is as follows. Catalyzes the synthesis of N-acetylaspartate acid (NAA) from L-aspartate and acetyl-CoA. Promotes dopamine uptake by regulating TNF-alpha expression. Attenuates methamphetamine-induced inhibition of dopamine uptake. The chain is N-acetylaspartate synthetase from Homo sapiens (Human).